The chain runs to 98 residues: NADH-ubiquinone oxidoreductase chain 4L (98 aa).

Transmembrane regions (helical) follow at residues 1–21 (MPYIYMNITLAFVISLIGTLM), 29–49 (SLLCLEGMLLSLFTLNALLSL), and 61–81 (LILLVFAACEAAVGLALLVMI).

Belongs to the complex I subunit 4L family. In terms of assembly, core subunit of respiratory chain NADH dehydrogenase (Complex I) which is composed of 45 different subunits.

The protein resides in the mitochondrion inner membrane. The enzyme catalyses a ubiquinone + NADH + 5 H(+)(in) = a ubiquinol + NAD(+) + 4 H(+)(out). In terms of biological role, core subunit of the mitochondrial membrane respiratory chain NADH dehydrogenase (Complex I) which catalyzes electron transfer from NADH through the respiratory chain, using ubiquinone as an electron acceptor. Part of the enzyme membrane arm which is embedded in the lipid bilayer and involved in proton translocation. In Elephas maximus (Indian elephant), this protein is NADH-ubiquinone oxidoreductase chain 4L (MT-ND4L).